Here is a 211-residue protein sequence, read N- to C-terminus: Protein-L-isoaspartate O-methyltransferase (211 aa).

Ser-62 is an active-site residue.

Belongs to the methyltransferase superfamily. L-isoaspartyl/D-aspartyl protein methyltransferase family.

It localises to the cytoplasm. The catalysed reaction is [protein]-L-isoaspartate + S-adenosyl-L-methionine = [protein]-L-isoaspartate alpha-methyl ester + S-adenosyl-L-homocysteine. In terms of biological role, catalyzes the methyl esterification of L-isoaspartyl residues in peptides and proteins that result from spontaneous decomposition of normal L-aspartyl and L-asparaginyl residues. It plays a role in the repair and/or degradation of damaged proteins. The chain is Protein-L-isoaspartate O-methyltransferase from Shewanella piezotolerans (strain WP3 / JCM 13877).